A 366-amino-acid polypeptide reads, in one-letter code: Sulfate/thiosulfate import ATP-binding protein CysA 2 (366 aa).

An ABC transporter domain is found at 14–243; that stretch reads LSVHALCRRF…PASRFVAEFV (230 aa). Position 46–53 (46–53) interacts with ATP; it reads GPSGCGKT.

This sequence belongs to the ABC transporter superfamily. Sulfate/tungstate importer (TC 3.A.1.6) family. In terms of assembly, the complex is composed of two ATP-binding proteins (CysA), two transmembrane proteins (CysT and CysW) and a solute-binding protein (CysP).

The protein resides in the cell inner membrane. The enzyme catalyses sulfate(out) + ATP + H2O = sulfate(in) + ADP + phosphate + H(+). It catalyses the reaction thiosulfate(out) + ATP + H2O = thiosulfate(in) + ADP + phosphate + H(+). Its function is as follows. Part of the ABC transporter complex CysAWTP involved in sulfate/thiosulfate import. Responsible for energy coupling to the transport system. In Chromobacterium violaceum (strain ATCC 12472 / DSM 30191 / JCM 1249 / CCUG 213 / NBRC 12614 / NCIMB 9131 / NCTC 9757 / MK), this protein is Sulfate/thiosulfate import ATP-binding protein CysA 2.